Reading from the N-terminus, the 192-residue chain is dITP/XTP pyrophosphatase (192 aa).

Residue Thr12 to Lys17 coordinates substrate. The Mg(2+) site is built by Glu41 and Asp70. The active-site Proton acceptor is the Asp70. Substrate contacts are provided by residues Ser71, Phe145–Asp148, Lys168, and His173–Arg174.

It belongs to the HAM1 NTPase family. As to quaternary structure, homodimer. Mg(2+) serves as cofactor.

It carries out the reaction XTP + H2O = XMP + diphosphate + H(+). The enzyme catalyses dITP + H2O = dIMP + diphosphate + H(+). The catalysed reaction is ITP + H2O = IMP + diphosphate + H(+). Pyrophosphatase that catalyzes the hydrolysis of nucleoside triphosphates to their monophosphate derivatives, with a high preference for the non-canonical purine nucleotides XTP (xanthosine triphosphate), dITP (deoxyinosine triphosphate) and ITP. Seems to function as a house-cleaning enzyme that removes non-canonical purine nucleotides from the nucleotide pool, thus preventing their incorporation into DNA/RNA and avoiding chromosomal lesions. This chain is dITP/XTP pyrophosphatase, found in Saccharolobus solfataricus (strain ATCC 35092 / DSM 1617 / JCM 11322 / P2) (Sulfolobus solfataricus).